Reading from the N-terminus, the 240-residue chain is UDP-2,3-diacylglucosamine hydrolase (240 aa).

Mn(2+) is bound by residues D8, H10, D41, N79, and H114. 79 to 80 (NR) contacts substrate. D122, S160, N164, K167, and H195 together coordinate substrate. Positions 195 and 197 each coordinate Mn(2+).

This sequence belongs to the LpxH family. Requires Mn(2+) as cofactor.

It is found in the cell inner membrane. The enzyme catalyses UDP-2-N,3-O-bis[(3R)-3-hydroxytetradecanoyl]-alpha-D-glucosamine + H2O = 2-N,3-O-bis[(3R)-3-hydroxytetradecanoyl]-alpha-D-glucosaminyl 1-phosphate + UMP + 2 H(+). Its pathway is glycolipid biosynthesis; lipid IV(A) biosynthesis; lipid IV(A) from (3R)-3-hydroxytetradecanoyl-[acyl-carrier-protein] and UDP-N-acetyl-alpha-D-glucosamine: step 4/6. Its function is as follows. Hydrolyzes the pyrophosphate bond of UDP-2,3-diacylglucosamine to yield 2,3-diacylglucosamine 1-phosphate (lipid X) and UMP by catalyzing the attack of water at the alpha-P atom. Involved in the biosynthesis of lipid A, a phosphorylated glycolipid that anchors the lipopolysaccharide to the outer membrane of the cell. This chain is UDP-2,3-diacylglucosamine hydrolase, found in Salmonella dublin (strain CT_02021853).